The primary structure comprises 198 residues: MELPDPVRQRLGNFSRTVFSDSNRTGPEYNEGPDNEMVSSLALQMSLYFNTYFFPLWWVSSIMMLQMKYSILPDYYKFIVVTIIILITLIEAIRLYLGYMGNLQEKVPELAGFWLLSLLLQLPLILFLLFNEGLTNLPLEKAVHIIFTIFLTFQVVSAFLTLRKMVNQLATRFHLQDFDRLSASRGDMRRVRSCIEEI.

N-linked (GlcNAc...) asparagine glycosylation is found at asparagine 13 and asparagine 23. 4 helical membrane-spanning segments follow: residues 45-65 (MSLYFNTYFFPLWWVSSIMML), 78-98 (FIVVTIIILITLIEAIRLYLG), 110-130 (LAGFWLLSLLLQLPLILFLLF), and 142-162 (AVHIIFTIFLTFQVVSAFLTL).

It belongs to the TMEM17 family. In terms of assembly, part of the tectonic-like complex (also named B9 complex).

Its subcellular location is the cell projection. The protein resides in the cilium membrane. In terms of biological role, transmembrane component of the tectonic-like complex, a complex localized at the transition zone of primary cilia and acting as a barrier that prevents diffusion of transmembrane proteins between the cilia and plasma membranes. Required for ciliogenesis and sonic hedgehog/SHH signaling. The protein is Transmembrane protein 17 (TMEM17) of Bos taurus (Bovine).